Consider the following 335-residue polypeptide: Glyceraldehyde-3-phosphate dehydrogenase 1 (335 aa).

Residues 13–14 (TI) and Gly111 each bind NAD(+). 140-142 (SCN) contributes to the D-glyceraldehyde 3-phosphate binding site. Residue Cys141 is the Nucleophile of the active site. Residue Arg169 coordinates NAD(+). Residues Thr171 and 195–196 (HG) contribute to the D-glyceraldehyde 3-phosphate site. Gln300 contacts NAD(+).

This sequence belongs to the glyceraldehyde-3-phosphate dehydrogenase family. In terms of assembly, homotetramer.

It is found in the cytoplasm. The catalysed reaction is D-glyceraldehyde 3-phosphate + phosphate + NADP(+) = (2R)-3-phospho-glyceroyl phosphate + NADPH + H(+). It catalyses the reaction D-glyceraldehyde 3-phosphate + phosphate + NAD(+) = (2R)-3-phospho-glyceroyl phosphate + NADH + H(+). Its pathway is carbohydrate degradation; glycolysis; pyruvate from D-glyceraldehyde 3-phosphate: step 1/5. This chain is Glyceraldehyde-3-phosphate dehydrogenase 1 (gapA), found in Methanosarcina acetivorans (strain ATCC 35395 / DSM 2834 / JCM 12185 / C2A).